The chain runs to 178 residues: uncharacterized protein (178 aa).

The segment at 1 to 89 is disordered; the sequence is MSAKEGSSHP…GEKKGKTEKL (89 aa). 2 stretches are compositionally biased toward basic and acidic residues: residues 44 to 53 and 61 to 89; these read PYQKNEKVVV and AFLHPEEAEAKKESEKPSDGEKKGKTEKL.

This is an uncharacterized protein from Schizosaccharomyces pombe (strain 972 / ATCC 24843) (Fission yeast).